Consider the following 192-residue polypeptide: Cytochrome b-245 light chain (192 aa).

Topologically, residues 2 to 7 (GQIEWA) are cytoplasmic. A helical membrane pass occupies residues 8–30 (MWANEQALASGLILITGGIVATA). The Extracellular portion of the chain corresponds to 31–35 (GRFTQ). The chain crosses the membrane as a helical span at residues 36–53 (WYFGAYSIVAGVLICLLE). The Cytoplasmic segment spans residues 54–69 (YPRGKRKKGSTMERCG). Residues 70 to 80 (QKYLTAVVKLF) lie within the membrane without spanning it. The Cytoplasmic portion of the chain corresponds to 81–86 (GPLTRN). Residues 87–104 (YYVRAVLHLLLSVPAGFL) traverse the membrane as a helical segment. Position 105 (Leu-105) is a topological domain, extracellular. A helical membrane pass occupies residues 106-126 (ATILGTVCLAIASVIYLLAAI). The Cytoplasmic portion of the chain corresponds to 127-192 (RGEQWTPIEP…NPIPVTDEVV (66 aa)). Residues 134-192 (IEPKPKERPQVGGTIKQPPTNPPPRPPAEVRKKPSEAEEEAASAGGPQVNPIPVTDEVV) are disordered. Residue Thr-147 is modified to Phosphothreonine. Lys-149 is covalently cross-linked (Glycyl lysine isopeptide (Lys-Gly) (interchain with G-Cter in ubiquitin)). Ser-168 and Ser-176 each carry phosphoserine.

This sequence belongs to the p22phox family. In terms of assembly, component of the phagocyte NADPH oxidase core complex/cytochrome b558 complex, composed of CYBB (heavy chain (beta)) and CYBA (light chain (alpha)). Component of the phagocyte NADPH oxidase complex composed of an obligatory core heterodimer formed by the membrane proteins CYBA and CYBB and the cytosolic regulatory subunits NCF1/p47-phox, NCF2/p67-phox, NCF4/p40-phox and the small GTPase RAC1 or RAC2. Interacts with NCF1 (via SH3 domain). Interacts with SH3PXD2A. Interacts with DUOX1, DUOX2 and TPO. Interacts with NOX4; this interaction mediates superoxide generation. Interacts with calprotectin (S100A8/9). Interacts with GBP7. Interacts with NOXO1. Forms a heterodimer with NOX3 and is essential for activity and cell membrane localization of NOX3. Interacts with NOX1. In terms of processing, phosphorylation at Thr-147 enhances NADPH oxidase activity by promoting NCF1/p47-phox binding. Ubiquitinated at Lys-149 likely by RNF145. Expressed to a relatively high level in kidney, spleen, thymus and lung, and to a lower level in aorta, adrenals, and heart. Expression is not detected in liver or brain.

The protein resides in the cell membrane. Functionally, subunit of NADPH oxidase complexes that is required for the NADPH oxidase activity that generates, in various cell types, superoxide from molecular oxygen utilizing NADPH as an electron donor. Subunit of the phagocyte NADPH oxidase complex that mediates the transfer of electrons from cytosolic NADPH to O2 to produce the superoxide anion (O2(-)). In the activated complex, electrons are first transferred from NADPH to flavin adenine dinucleotide (FAD) and subsequently transferred via two heme molecules to molecular oxygen, producing superoxide through an outer-sphere reaction. Activation of the NADPH oxidase complex is initiated by the assembly of cytosolic subunits of the NADPH oxidase complex with the core NADPH oxidase complex to form a complex at the plasma membrane or phagosomal membrane. This activation process is initiated by phosphorylation dependent binding of the cytosolic NCF1/p47-phox subunit to the C-terminus of CYBA/p22-phox. Aassociates with NOX3 to form a functional NADPH oxidase constitutively generating superoxide. This is Cytochrome b-245 light chain from Rattus norvegicus (Rat).